The sequence spans 270 residues: Glutamate 5-kinase (270 aa).

Lys18 serves as a coordination point for ATP. Substrate-binding residues include Ser54, Asp141, and Asn153. Ser173–Asp174 is an ATP binding site.

Belongs to the glutamate 5-kinase family.

The protein resides in the cytoplasm. It carries out the reaction L-glutamate + ATP = L-glutamyl 5-phosphate + ADP. It participates in amino-acid biosynthesis; L-proline biosynthesis; L-glutamate 5-semialdehyde from L-glutamate: step 1/2. Catalyzes the transfer of a phosphate group to glutamate to form L-glutamate 5-phosphate. This is Glutamate 5-kinase from Leifsonia xyli subsp. xyli (strain CTCB07).